Consider the following 87-residue polypeptide: Small ribosomal subunit protein uS17 (87 aa).

Belongs to the universal ribosomal protein uS17 family. Part of the 30S ribosomal subunit.

In terms of biological role, one of the primary rRNA binding proteins, it binds specifically to the 5'-end of 16S ribosomal RNA. This chain is Small ribosomal subunit protein uS17, found in Aster yellows witches'-broom phytoplasma (strain AYWB).